The following is a 573-amino-acid chain: L-lactate dehydrogenase (cytochrome) (573 aa).

A mitochondrion-targeting transit peptide spans 1–73 (MFKSQLRTAT…LYQKDKFISA (73 aa)). Positions 80–157 (DIELTPEIVS…PPEKHLGPLV (78 aa)) constitute a Cytochrome b5 heme-binding domain. Heme b contacts are provided by H115, H138, and Y208. In terms of domain architecture, FMN hydroxy acid dehydrogenase spans 182–542 (PPLSQMINLH…TPELLDTRSI (361 aa)). Position 208 (Y208) interacts with pyruvate. FMN-binding positions include 260 to 263 (SATA), S290, and Q313. Position 315 (Y315) interacts with pyruvate. Residue T341 participates in FMN binding. Heme b is bound at residue K357. K408 lines the FMN pocket. The pyruvate site is built by H432 and R435. Residues 468 to 472 (DGGVR) and 491 to 492 (GR) each bind FMN.

In the N-terminal section; belongs to the cytochrome b5 family. This sequence in the C-terminal section; belongs to the FMN-dependent alpha-hydroxy acid dehydrogenase family. As to quaternary structure, homotetramer. Requires FMN as cofactor. Heme b is required as a cofactor.

It localises to the mitochondrion intermembrane space. It catalyses the reaction (S)-lactate + 2 Fe(III)-[cytochrome c] = 2 Fe(II)-[cytochrome c] + pyruvate + 2 H(+). Catalyzes the oxidation of (S)-lactate (L-lactate) to pyruvate with subsequent transfer of electrons to cytochrome c. Is involved in the utilization of (S)-lactate as a sole source of carbon for growth. The sequence is that of L-lactate dehydrogenase (cytochrome) (CYB2) from Wickerhamomyces anomalus (Yeast).